The chain runs to 505 residues: ATP synthase subunit beta, mitochondrial (505 aa).

Gly184–Thr191 serves as a coordination point for ATP.

This sequence belongs to the ATPase alpha/beta chains family. F-type ATPases have 2 components, CF(1) - the catalytic core - and CF(0) - the membrane proton channel. CF(1) has five subunits: alpha(3), beta(3), gamma(1), delta(1), epsilon(1). CF(0) has three main subunits: a, b and c.

Its subcellular location is the mitochondrion. The protein localises to the mitochondrion inner membrane. It catalyses the reaction ATP + H2O + 4 H(+)(in) = ADP + phosphate + 5 H(+)(out). Functionally, mitochondrial membrane ATP synthase (F(1)F(0) ATP synthase or Complex V) produces ATP from ADP in the presence of a proton gradient across the membrane which is generated by electron transport complexes of the respiratory chain. F-type ATPases consist of two structural domains, F(1) - containing the extramembraneous catalytic core, and F(0) - containing the membrane proton channel, linked together by a central stalk and a peripheral stalk. During catalysis, ATP synthesis in the catalytic domain of F(1) is coupled via a rotary mechanism of the central stalk subunits to proton translocation. Subunits alpha and beta form the catalytic core in F(1). Rotation of the central stalk against the surrounding alpha(3)beta(3) subunits leads to hydrolysis of ATP in three separate catalytic sites on the beta subunits. The chain is ATP synthase subunit beta, mitochondrial (ATP2) from Kluyveromyces lactis (strain ATCC 8585 / CBS 2359 / DSM 70799 / NBRC 1267 / NRRL Y-1140 / WM37) (Yeast).